We begin with the raw amino-acid sequence, 298 residues long: Probable alpha-L-glutamate ligase (298 aa).

The region spanning 108-290 (LQLLLKTGVP…IAAEIIDYIE (183 aa)) is the ATP-grasp domain. Residues Lys-144, 181–182 (DF), Asp-190, and 214–216 (RAN) contribute to the ATP site. Asp-251, Glu-263, and Asn-265 together coordinate Mg(2+). 3 residues coordinate Mn(2+): Asp-251, Glu-263, and Asn-265.

The protein belongs to the RimK family. It depends on Mg(2+) as a cofactor. The cofactor is Mn(2+).

The chain is Probable alpha-L-glutamate ligase from Haemophilus influenzae (strain PittEE).